We begin with the raw amino-acid sequence, 448 residues long: UDP-N-acetylmuramoylalanine--D-glutamate ligase (448 aa).

5 residues coordinate UDP-N-acetyl-alpha-D-muramoyl-L-alanine: Lys17, Ser18, Thr38, Arg39, and Gly78. 116–122 (GSNAKST) is a binding site for ATP. Residues Ala119, Lys120, Ser121, and Thr122 each coordinate ADP. UDP-N-acetyl-alpha-D-muramoyl-L-alanine is bound by residues Asn143 and His188. ADP contacts are provided by Asn278, Arg309, Asp324, and Lys326.

It belongs to the MurCDEF family.

It is found in the cytoplasm. It carries out the reaction UDP-N-acetyl-alpha-D-muramoyl-L-alanine + D-glutamate + ATP = UDP-N-acetyl-alpha-D-muramoyl-L-alanyl-D-glutamate + ADP + phosphate + H(+). Its pathway is cell wall biogenesis; peptidoglycan biosynthesis. Functionally, involved in cell wall formation. Catalyzes the addition of D-glutamate to the peptidoglycan precursor UDP-N-acetylmuramoyl-L-alanine (UMA). The protein is UDP-N-acetylmuramoylalanine--D-glutamate ligase of Pseudomonas aeruginosa (strain ATCC 15692 / DSM 22644 / CIP 104116 / JCM 14847 / LMG 12228 / 1C / PRS 101 / PAO1).